The sequence spans 976 residues: Ephrin type-B receptor 4b (976 aa).

Residues 1-23 (MDRVCWIMALSWFWMVSTGLVSA) form the signal peptide. Topologically, residues 24 to 541 (EEEVLMNTKL…ESPSRLMLTG (518 aa)) are extracellular. The Eph LBD domain maps to 25–204 (EEVLMNTKLE…FFKKCPAVSR (180 aa)). 2 disulfides stabilise this stretch: cysteine 69–cysteine 186 and cysteine 103–cysteine 113. Fibronectin type-III domains follow at residues 326–434 (PPSA…TSRD) and 438–529 (PVSG…TLPD). The chain crosses the membrane as a helical span at residues 542–562 (VLVAIGLLILIAVVIVAVFCF). Topologically, residues 563–976 (RRSTRRRDPD…LRIHGGSLRY (414 aa)) are cytoplasmic. Residues 613-897 (VKIEEVIGAG…IPDGPSHPLL (285 aa)) form the Protein kinase domain. ATP is bound by residues 619-627 (IGAGEFGEV) and lysine 645. The active-site Proton acceptor is aspartate 738. In terms of domain architecture, SAM spans 906–970 (SHCSSVADWL…LSSVQTLRIH (65 aa)).

The protein belongs to the protein kinase superfamily. Tyr protein kinase family. Ephrin receptor subfamily.

The protein localises to the cell membrane. It carries out the reaction L-tyrosyl-[protein] + ATP = O-phospho-L-tyrosyl-[protein] + ADP + H(+). Functionally, receptor tyrosine kinase which binds promiscuously transmembrane ephrin-B family ligands residing on adjacent cells, leading to contact-dependent bidirectional signaling into neighboring cells. The signaling pathway downstream of the receptor is referred to as forward signaling while the signaling pathway downstream of the ephrin ligand is referred to as reverse signaling. Together with its cognate ligand/functional ligand EFNB2 is involved in the regulation of cell adhesion and cell migration, and plays a central role in heart morphogenesis, angiogenesis and blood vessel remodeling and permeability. EPHB4-mediated forward signaling controls cellular repulsion and segregation from EFNB2-expressing cells. Involved in somitogenesis. This chain is Ephrin type-B receptor 4b, found in Danio rerio (Zebrafish).